Here is a 90-residue protein sequence, read N- to C-terminus: DNA-binding protein HU-alpha (90 aa).

Belongs to the bacterial histone-like protein family. As to quaternary structure, heterodimer of an alpha and a beta chain.

In terms of biological role, histone-like DNA-binding protein which is capable of wrapping DNA to stabilize it, and thus to prevent its denaturation under extreme environmental conditions. This Vibrio cholerae serotype O1 (strain ATCC 39315 / El Tor Inaba N16961) protein is DNA-binding protein HU-alpha (hupA).